Here is a 1786-residue protein sequence, read N- to C-terminus: Protein TIC 214 (1786 aa).

Transmembrane regions (helical) follow at residues Ile-19–Gly-39, Phe-68–Leu-88, Pro-91–His-111, Val-133–Leu-153, Val-176–Ile-196, and Ile-227–Ile-247. Positions Ser-1007–Tyr-1046 form a coiled coil.

The protein belongs to the TIC214 family. In terms of assembly, part of the Tic complex. Component of the 1-MD complex, composed of TIC20-I, TIC214, TIC100 and TIC56. Interacts with the translocating preproteins. Hydrolysis of ATP is essential for the formation of this complex. The 1-MD complex interacts with TIC21.

The protein localises to the plastid. The protein resides in the chloroplast inner membrane. In terms of biological role, involved in protein precursor import into chloroplasts. May be part of an intermediate translocation complex acting as a protein-conducting channel at the inner envelope. This is Protein TIC 214 from Arabidopsis thaliana (Mouse-ear cress).